The sequence spans 75 residues: UPF0729 protein C18orf32 homolog (75 aa).

Residues 1–37 (MVCIPCIVIPVLLWVYKRFLEPVLYPIISPIISRFWR) form a necessary for its localzation to the endoplasmic reticulum and lipid droplets region. The segment covering 43-65 (DTPQQKTSTAECNGAANGSTANG) has biased composition (polar residues). The segment at 43 to 75 (DTPQQKTSTAECNGAANGSTANGPKTVADKKAD) is disordered.

It belongs to the UPF0729 family.

The protein resides in the endoplasmic reticulum. It is found in the lipid droplet. This Danio rerio (Zebrafish) protein is UPF0729 protein C18orf32 homolog.